The primary structure comprises 126 residues: Histone H2B 1.1 (126 aa).

A compositionally biased stretch (low complexity) spans Met-1 to Lys-12. The interval Met-1 to Lys-35 is disordered. N6-acetyllysine is present on residues Lys-6 and Lys-13. A Phosphoserine modification is found at Ser-15. 2 positions are modified to N6-acetyllysine: Lys-16 and Lys-21. The O-linked (GlcNAc) serine glycan is linked to Ser-113. Lys-121 participates in a covalent cross-link: Glycyl lysine isopeptide (Lys-Gly) (interchain with G-Cter in ubiquitin).

This sequence belongs to the histone H2B family. The nucleosome is a histone octamer containing two molecules each of H2A, H2B, H3 and H4 assembled in one H3-H4 heterotetramer and two H2A-H2B heterodimers. The octamer wraps approximately 147 bp of DNA. In terms of processing, monoubiquitination of Lys-121 by BRE1 gives a specific tag for epigenetic transcriptional activation and is also prerequisite for histone H3 'Lys-4' and 'Lys-79' methylation. Phosphorylated on Ser-15 during developmentally programmed apoptosis; which may facilitate apoptotic chromatin condensation. Post-translationally, glcNAcylation at Ser-113 promotes monoubiquitination of Lys-121. It fluctuates in response to extracellular glucose, and associates with transcribed genes.

The protein localises to the nucleus. It is found in the chromosome. Its function is as follows. Core component of nucleosome. Nucleosomes wrap and compact DNA into chromatin, limiting DNA accessibility to the cellular machineries which require DNA as a template. Histones thereby play a central role in transcription regulation, DNA repair, DNA replication and chromosomal stability. DNA accessibility is regulated via a complex set of post-translational modifications of histones, also called histone code, and nucleosome remodeling. In Xenopus laevis (African clawed frog), this protein is Histone H2B 1.1.